Consider the following 419-residue polypeptide: Histidine--tRNA ligase (419 aa).

This sequence belongs to the class-II aminoacyl-tRNA synthetase family. As to quaternary structure, homodimer.

Its subcellular location is the cytoplasm. It carries out the reaction tRNA(His) + L-histidine + ATP = L-histidyl-tRNA(His) + AMP + diphosphate + H(+). This is Histidine--tRNA ligase from Caldicellulosiruptor saccharolyticus (strain ATCC 43494 / DSM 8903 / Tp8T 6331).